The primary structure comprises 245 residues: 8-amino-3,8-dideoxy-manno-octulosonate cytidylyltransferase (245 aa).

Belongs to the KdsB family.

The protein localises to the cytoplasm. It carries out the reaction 8-amino-3,8-dideoxy-alpha-D-manno-octulosonate + CTP = CMP-8-amino-3,8-dideoxy-alpha-D-manno-oct-2-ulosonate + diphosphate. The protein operates within bacterial outer membrane biogenesis; lipopolysaccharide biosynthesis. Its function is as follows. Activates KDO8N (a required 8-carbon sugar) for incorporation into bacterial lipopolysaccharide in the Shewanella genus. The polypeptide is 8-amino-3,8-dideoxy-manno-octulosonate cytidylyltransferase (Shewanella piezotolerans (strain WP3 / JCM 13877)).